We begin with the raw amino-acid sequence, 92 residues long: Small ribosomal subunit protein uS19 (92 aa).

The protein belongs to the universal ribosomal protein uS19 family.

Functionally, protein S19 forms a complex with S13 that binds strongly to the 16S ribosomal RNA. This is Small ribosomal subunit protein uS19 from Nostoc sp. (strain PCC 7120 / SAG 25.82 / UTEX 2576).